The sequence spans 150 residues: Flagellar assembly factor FliW (150 aa).

This sequence belongs to the FliW family. In terms of assembly, interacts with translational regulator CsrA and flagellin(s).

Its subcellular location is the cytoplasm. In terms of biological role, acts as an anti-CsrA protein, binds CsrA and prevents it from repressing translation of its target genes, one of which is flagellin. Binds to flagellin and participates in the assembly of the flagellum. This Leptospira interrogans serogroup Icterohaemorrhagiae serovar Lai (strain 56601) protein is Flagellar assembly factor FliW.